Reading from the N-terminus, the 1196-residue chain is Nucleolar protein 6 (1196 aa).

Disordered regions lie at residues 1 to 74 (MPGK…NVKP) and 1140 to 1196 (KREQ…KALK). 2 stretches are compositionally biased toward basic and acidic residues: residues 22–31 (HAEDHSDLEH) and 65–74 (HRGDTKNVKP). A compositionally biased stretch (basic residues) spans 1165-1187 (KPKKHGKRKGTGKAAPPKKKRLI).

It belongs to the NRAP family. As to quaternary structure, part of the small subunit (SSU) processome, composed of more than 70 proteins and the RNA chaperone small nucleolar RNA (snoRNA) U3.

It is found in the nucleus. The protein resides in the nucleolus. The protein localises to the chromosome. Its function is as follows. Part of the small subunit (SSU) processome, first precursor of the small eukaryotic ribosomal subunit. During the assembly of the SSU processome in the nucleolus, many ribosome biogenesis factors, an RNA chaperone and ribosomal proteins associate with the nascent pre-rRNA and work in concert to generate RNA folding, modifications, rearrangements and cleavage as well as targeted degradation of pre-ribosomal RNA by the RNA exosome. The chain is Nucleolar protein 6 from Drosophila simulans (Fruit fly).